Consider the following 404-residue polypeptide: Omega-3 fatty acid desaturase, chloroplastic (404 aa).

The disordered stretch occupies residues 28–50 (TVDSSSSPPIEEEPKTQRFDPGA). Positions 121-125 (HDCGH) match the Histidine box-1 motif. Positions 157–161 (HRTHH) match the Histidine box-2 motif. The Histidine box-3 signature appears at 324–328 (HVIHH).

It belongs to the fatty acid desaturase type 1 family.

Its subcellular location is the plastid. The protein localises to the chloroplast membrane. It functions in the pathway lipid metabolism; polyunsaturated fatty acid biosynthesis. Chloroplast omega-3 fatty acid desaturase introduces the third double bond in the biosynthesis of 16:3 and 18:3 fatty acids, important constituents of plant membranes. It is thought to use ferredoxin as an electron donor and to act on fatty acids esterified to galactolipids, sulfolipids and phosphatidylglycerol. This is Omega-3 fatty acid desaturase, chloroplastic (FAD7) from Brassica napus (Rape).